Reading from the N-terminus, the 290-residue chain is Pyridoxal kinase PdxY (290 aa).

Substrate is bound by residues Ser12 and 47–48 (TQ). ATP is bound by residues Asp114, Glu151, Lys184, and 211-214 (RPLL). Asp225 lines the substrate pocket.

This sequence belongs to the pyridoxine kinase family. PdxY subfamily. As to quaternary structure, homodimer. The cofactor is Mg(2+).

The enzyme catalyses pyridoxal + ATP = pyridoxal 5'-phosphate + ADP + H(+). Its pathway is cofactor metabolism; pyridoxal 5'-phosphate salvage; pyridoxal 5'-phosphate from pyridoxal: step 1/1. Functionally, pyridoxal kinase involved in the salvage pathway of pyridoxal 5'-phosphate (PLP). Catalyzes the phosphorylation of pyridoxal to PLP. The chain is Pyridoxal kinase PdxY from Pseudomonas putida (strain ATCC 47054 / DSM 6125 / CFBP 8728 / NCIMB 11950 / KT2440).